The sequence spans 498 residues: ATP synthase subunit beta, chloroplastic (498 aa).

172–179 provides a ligand contact to ATP; sequence GGAGVGKT.

This sequence belongs to the ATPase alpha/beta chains family. F-type ATPases have 2 components, CF(1) - the catalytic core - and CF(0) - the membrane proton channel. CF(1) has five subunits: alpha(3), beta(3), gamma(1), delta(1), epsilon(1). CF(0) has four main subunits: a(1), b(1), b'(1) and c(9-12).

The protein localises to the plastid. It is found in the chloroplast thylakoid membrane. The catalysed reaction is ATP + H2O + 4 H(+)(in) = ADP + phosphate + 5 H(+)(out). Its function is as follows. Produces ATP from ADP in the presence of a proton gradient across the membrane. The catalytic sites are hosted primarily by the beta subunits. The sequence is that of ATP synthase subunit beta, chloroplastic from Calycanthus floridus (Eastern sweetshrub).